Consider the following 108-residue polypeptide: DNA-binding protein HBbu (108 aa).

It belongs to the bacterial histone-like protein family.

Its function is as follows. Histone-like DNA-binding protein which is capable of wrapping DNA to stabilize it, and thus to prevent its denaturation under extreme environmental conditions. In Borrelia andersonii (Borreliella andersonii), this protein is DNA-binding protein HBbu (hbb).